The chain runs to 308 residues: Porphobilinogen deaminase (308 aa).

C240 carries the post-translational modification S-(dipyrrolylmethanemethyl)cysteine.

The protein belongs to the HMBS family. Monomer. Requires dipyrromethane as cofactor.

It catalyses the reaction 4 porphobilinogen + H2O = hydroxymethylbilane + 4 NH4(+). The protein operates within porphyrin-containing compound metabolism; protoporphyrin-IX biosynthesis; coproporphyrinogen-III from 5-aminolevulinate: step 2/4. Tetrapolymerization of the monopyrrole PBG into the hydroxymethylbilane pre-uroporphyrinogen in several discrete steps. The protein is Porphobilinogen deaminase of Laribacter hongkongensis (strain HLHK9).